Consider the following 447-residue polypeptide: N-succinylarginine dihydrolase (447 aa).

Substrate contacts are provided by residues 19 to 28, N110, and 137 to 138; these read AGLSVGNKAS and HR. The active site involves E174. Residue R213 participates in substrate binding. Residue H249 is part of the active site. Residues D251 and N365 each coordinate substrate. The active-site Nucleophile is the C371.

The protein belongs to the succinylarginine dihydrolase family. In terms of assembly, homodimer.

It carries out the reaction N(2)-succinyl-L-arginine + 2 H2O + 2 H(+) = N(2)-succinyl-L-ornithine + 2 NH4(+) + CO2. Its pathway is amino-acid degradation; L-arginine degradation via AST pathway; L-glutamate and succinate from L-arginine: step 2/5. Its function is as follows. Catalyzes the hydrolysis of N(2)-succinylarginine into N(2)-succinylornithine, ammonia and CO(2). The protein is N-succinylarginine dihydrolase of Photorhabdus laumondii subsp. laumondii (strain DSM 15139 / CIP 105565 / TT01) (Photorhabdus luminescens subsp. laumondii).